The sequence spans 380 residues: Cytochrome b (380 aa).

4 consecutive transmembrane segments (helical) span residues phenylalanine 34–threonine 54, tryptophan 78–isoleucine 99, tryptophan 114–leucine 134, and phenylalanine 179–threonine 199. The heme b site is built by histidine 84 and histidine 98. Histidine 183 and histidine 197 together coordinate heme b. Histidine 202 provides a ligand contact to a ubiquinone. A run of 4 helical transmembrane segments spans residues leucine 227–serine 247, leucine 289–histidine 309, phenylalanine 321–serine 341, and phenylalanine 348–proline 368.

Belongs to the cytochrome b family. As to quaternary structure, the cytochrome bc1 complex contains 11 subunits: 3 respiratory subunits (MT-CYB, CYC1 and UQCRFS1), 2 core proteins (UQCRC1 and UQCRC2) and 6 low-molecular weight proteins (UQCRH/QCR6, UQCRB/QCR7, UQCRQ/QCR8, UQCR10/QCR9, UQCR11/QCR10 and a cleavage product of UQCRFS1). This cytochrome bc1 complex then forms a dimer. Requires heme b as cofactor.

Its subcellular location is the mitochondrion inner membrane. In terms of biological role, component of the ubiquinol-cytochrome c reductase complex (complex III or cytochrome b-c1 complex) that is part of the mitochondrial respiratory chain. The b-c1 complex mediates electron transfer from ubiquinol to cytochrome c. Contributes to the generation of a proton gradient across the mitochondrial membrane that is then used for ATP synthesis. This chain is Cytochrome b (MT-CYB), found in Alle alle (Dovekie).